We begin with the raw amino-acid sequence, 430 residues long: Enolase (430 aa).

Gln-163 lines the (2R)-2-phosphoglycerate pocket. The active-site Proton donor is the Glu-205. Asp-242, Glu-287, and Asp-314 together coordinate Mg(2+). 4 residues coordinate (2R)-2-phosphoglycerate: Lys-339, Arg-368, Ser-369, and Lys-390. Catalysis depends on Lys-339, which acts as the Proton acceptor.

It belongs to the enolase family. Mg(2+) serves as cofactor.

The protein localises to the cytoplasm. Its subcellular location is the secreted. It localises to the cell surface. The catalysed reaction is (2R)-2-phosphoglycerate = phosphoenolpyruvate + H2O. It functions in the pathway carbohydrate degradation; glycolysis; pyruvate from D-glyceraldehyde 3-phosphate: step 4/5. In terms of biological role, catalyzes the reversible conversion of 2-phosphoglycerate (2-PG) into phosphoenolpyruvate (PEP). It is essential for the degradation of carbohydrates via glycolysis. This chain is Enolase, found in Alkaliphilus metalliredigens (strain QYMF).